A 215-amino-acid chain; its full sequence is Urease accessory protein UreG (215 aa).

Residues 1 to 21 are disordered; it reads MNAPASSPARRTKKLPPLRVG. 24-31 serves as a coordination point for GTP; that stretch reads GPVGSGKT.

This sequence belongs to the SIMIBI class G3E GTPase family. UreG subfamily. Homodimer. UreD, UreF and UreG form a complex that acts as a GTP-hydrolysis-dependent molecular chaperone, activating the urease apoprotein by helping to assemble the nickel containing metallocenter of UreC. The UreE protein probably delivers the nickel.

Its subcellular location is the cytoplasm. Its function is as follows. Facilitates the functional incorporation of the urease nickel metallocenter. This process requires GTP hydrolysis, probably effectuated by UreG. The sequence is that of Urease accessory protein UreG from Burkholderia vietnamiensis (strain G4 / LMG 22486) (Burkholderia cepacia (strain R1808)).